A 179-amino-acid polypeptide reads, in one-letter code: Putative 5'(3')-deoxyribonucleotidase (179 aa).

Residue Asp9 is the Nucleophile of the active site. The Mg(2+) site is built by Asp9, Asp11, and Asp135. The active-site Proton donor is the Asp11.

Belongs to the 5'(3')-deoxyribonucleotidase family. It depends on Mg(2+) as a cofactor.

Functionally, dephosphorylates the 5' and 2'(3')-phosphates of deoxyribonucleotides. This Staphylococcus epidermidis (strain ATCC 12228 / FDA PCI 1200) protein is Putative 5'(3')-deoxyribonucleotidase.